The sequence spans 153 residues: 6,7-dimethyl-8-ribityllumazine synthase (153 aa).

5-amino-6-(D-ribitylamino)uracil-binding positions include F21, 55 to 57 (AFE), and 79 to 81 (TVI). 84–85 (AT) contacts (2S)-2-hydroxy-3-oxobutyl phosphate. Catalysis depends on H87, which acts as the Proton donor. Position 112 (F112) interacts with 5-amino-6-(D-ribitylamino)uracil. Residue R126 participates in (2S)-2-hydroxy-3-oxobutyl phosphate binding.

Belongs to the DMRL synthase family. Forms an icosahedral capsid composed of 60 subunits, arranged as a dodecamer of pentamers.

It carries out the reaction (2S)-2-hydroxy-3-oxobutyl phosphate + 5-amino-6-(D-ribitylamino)uracil = 6,7-dimethyl-8-(1-D-ribityl)lumazine + phosphate + 2 H2O + H(+). It functions in the pathway cofactor biosynthesis; riboflavin biosynthesis; riboflavin from 2-hydroxy-3-oxobutyl phosphate and 5-amino-6-(D-ribitylamino)uracil: step 1/2. Its function is as follows. Catalyzes the formation of 6,7-dimethyl-8-ribityllumazine by condensation of 5-amino-6-(D-ribitylamino)uracil with 3,4-dihydroxy-2-butanone 4-phosphate. This is the penultimate step in the biosynthesis of riboflavin. The polypeptide is 6,7-dimethyl-8-ribityllumazine synthase (Bacillus cereus (strain AH187)).